Consider the following 390-residue polypeptide: Chorismate synthase 2 (390 aa).

Arginine 39 and arginine 45 together coordinate NADP(+). FMN is bound by residues 132–134, 253–254, glycine 298, 313–317, and arginine 339; these read RSS, NA, and KPIPT.

It belongs to the chorismate synthase family. In terms of assembly, homotetramer. The cofactor is FMNH2.

It catalyses the reaction 5-O-(1-carboxyvinyl)-3-phosphoshikimate = chorismate + phosphate. Its pathway is metabolic intermediate biosynthesis; chorismate biosynthesis; chorismate from D-erythrose 4-phosphate and phosphoenolpyruvate: step 7/7. In terms of biological role, catalyzes the anti-1,4-elimination of the C-3 phosphate and the C-6 proR hydrogen from 5-enolpyruvylshikimate-3-phosphate (EPSP) to yield chorismate, which is the branch point compound that serves as the starting substrate for the three terminal pathways of aromatic amino acid biosynthesis. This reaction introduces a second double bond into the aromatic ring system. This is Chorismate synthase 2 from Bacillus thuringiensis subsp. konkukian (strain 97-27).